Consider the following 128-residue polypeptide: Large ribosomal subunit protein bL12 (128 aa).

This sequence belongs to the bacterial ribosomal protein bL12 family. Homodimer. Part of the ribosomal stalk of the 50S ribosomal subunit. Forms a multimeric L10(L12)X complex, where L10 forms an elongated spine to which 2 to 4 L12 dimers bind in a sequential fashion. Binds GTP-bound translation factors.

Functionally, forms part of the ribosomal stalk which helps the ribosome interact with GTP-bound translation factors. Is thus essential for accurate translation. The protein is Large ribosomal subunit protein bL12 of Corynebacterium efficiens (strain DSM 44549 / YS-314 / AJ 12310 / JCM 11189 / NBRC 100395).